The following is a 189-amino-acid chain: Recombination protein RecR (189 aa).

A C4-type zinc finger spans residues 48–63 (CQTCFHLSAEPTCEIC). A Toprim domain is found at 71-165 (GMLCVVADSR…EVSRIAYGLP (95 aa)).

The protein belongs to the RecR family.

Its function is as follows. May play a role in DNA repair. It seems to be involved in an RecBC-independent recombinational process of DNA repair. It may act with RecF and RecO. This chain is Recombination protein RecR, found in Synechococcus sp. (strain CC9311).